The following is a 375-amino-acid chain: G-protein coupled estrogen receptor 1 (375 aa).

M1 carries the N-acetylmethionine modification. At 1–62 (MDVTSQARGV…QQYVIGLFLS (62 aa)) the chain is on the extracellular side. N-linked (GlcNAc...) asparagine glycans are attached at residues N25, N32, and N44. Residues 63–84 (CLYTIFLFPIGFVGNILILVVN) traverse the membrane as a helical segment. The Cytoplasmic portion of the chain corresponds to 85 to 96 (ISFREKMTIPDL). Residues 97-120 (YFINLAVADLILVADSLIEVFNLH) traverse the membrane as a helical segment. Topologically, residues 121 to 132 (ERYYDIAVLCTF) are extracellular. Residues C130 and C207 are joined by a disulfide bond. A helical transmembrane segment spans residues 133–153 (MSLFLQVNMYSSVFFLTWMSF). The Cytoplasmic portion of the chain corresponds to 154 to 175 (DRYIALARAMRCSLFRTKHHAR). Residues 176–194 (LSCGLIWMASVSATLVPFT) traverse the membrane as a helical segment. Topologically, residues 195–220 (AVHLQHTDEACFCFADVREVQWLEVT) are extracellular. Residues 221-236 (LGFIVPFAIIGLCYSL) traverse the membrane as a helical segment. The Cytoplasmic segment spans residues 237 to 259 (IVRVLVRAHRHRGLRPRRQKALR). Residues 260-280 (MILAVVLVFFVCWLPENVFIS) traverse the membrane as a helical segment. Over 281–306 (VHLLQRTQPGAAPCKQSFRHAHPLTG) the chain is Extracellular. Residues 307-327 (HIVNLAAFSNSCLNPLIYSFL) traverse the membrane as a helical segment. The Cytoplasmic segment spans residues 328 to 375 (GETFRDKLRLYIEQKTNLPALNRFCHAALKAVIPDSTEQSDVRFSSAV).

This sequence belongs to the G-protein coupled receptor 1 family. Homodimer. Heterodimer; heterodimerizes with other G-protein-coupled receptor (GPCRs) like CRHR1, HTR1A and PAQR8. Interacts (via C-terminus tail motif) with DLG4 (via N-terminus tandem pair of PDZ domains); the interaction is direct and induces the increase of GPER1 protein levels residing at the plasma membrane surface in a estradiol-independent manner. Interacts with RAMP3; the interaction confers proper subcellular localization and function in cardioprotection. Interacts with KRT7 and KRT8. Interacts with EGFR; the interaction increases after agonist-induced stimulation in cancer-associated fibroblasts (CAF). Interacts with EGFR and ESR1. In terms of processing, ubiquitinated; ubiquitination occurs at the plasma membrane and leads to proteasome-mediated degradation. Post-translationally, glycosylated. As to expression, expressed in placenta, endothelial and epithelial cells, non laboring and laboring term myometrium, fibroblasts and cancer-associated fibroblasts (CAF), prostate cancer cells and invasive adenocarcinoma (at protein level). Ubiquitously expressed, but is most abundant in placenta. In brain regions, expressed as a 2.8 kb transcript in basal forebrain, frontal cortex, thalamus, hippocampus, caudate and putamen.

It localises to the nucleus. The protein resides in the cytoplasm. Its subcellular location is the perinuclear region. The protein localises to the cytoskeleton. It is found in the cell membrane. It localises to the basolateral cell membrane. The protein resides in the cytoplasmic vesicle membrane. Its subcellular location is the early endosome. The protein localises to the recycling endosome. It is found in the golgi apparatus membrane. It localises to the golgi apparatus. The protein resides in the trans-Golgi network. Its subcellular location is the endoplasmic reticulum membrane. The protein localises to the cell projection. It is found in the dendrite. It localises to the dendritic spine membrane. The protein resides in the axon. Its subcellular location is the postsynaptic density. The protein localises to the mitochondrion membrane. In terms of biological role, G-protein coupled estrogen receptor that binds to 17-beta-estradiol (E2) with high affinity, leading to rapid and transient activation of numerous intracellular signaling pathways. Stimulates cAMP production, calcium mobilization and tyrosine kinase Src inducing the release of heparin-bound epidermal growth factor (HB-EGF) and subsequent transactivation of the epidermal growth factor receptor (EGFR), activating downstream signaling pathways such as PI3K/Akt and ERK/MAPK. Mediates pleiotropic functions among others in the cardiovascular, endocrine, reproductive, immune and central nervous systems. Has a role in cardioprotection by reducing cardiac hypertrophy and perivascular fibrosis in a RAMP3-dependent manner. Regulates arterial blood pressure by stimulating vasodilation and reducing vascular smooth muscle and microvascular endothelial cell proliferation. Plays a role in blood glucose homeostasis contributing to the insulin secretion response by pancreatic beta cells. Triggers mitochondrial apoptosis during pachytene spermatocyte differentiation. Stimulates uterine epithelial cell proliferation. Enhances uterine contractility in response to oxytocin. Contributes to thymic atrophy by inducing apoptosis. Attenuates TNF-mediated endothelial expression of leukocyte adhesion molecules. Promotes neuritogenesis in developing hippocampal neurons. Plays a role in acute neuroprotection against NMDA-induced excitotoxic neuronal death. Increases firing activity and intracellular calcium oscillations in luteinizing hormone-releasing hormone (LHRH) neurons. Inhibits early osteoblast proliferation at growth plate during skeletal development. Inhibits mature adipocyte differentiation and lipid accumulation. Involved in the recruitment of beta-arrestin 2 ARRB2 at the plasma membrane in epithelial cells. Also functions as a receptor for aldosterone mediating rapid regulation of vascular contractibility through the PI3K/ERK signaling pathway. Involved in cancer progression regulation. Stimulates cancer-associated fibroblast (CAF) proliferation by a rapid genomic response through the EGFR/ERK transduction pathway. Associated with EGFR, may act as a transcription factor activating growth regulatory genes (c-fos, cyclin D1). Promotes integrin alpha-5/beta-1 and fibronectin (FN) matrix assembly in breast cancer cells. The sequence is that of G-protein coupled estrogen receptor 1 from Homo sapiens (Human).